A 118-amino-acid chain; its full sequence is Large ribosomal subunit protein uL24 (118 aa).

The protein belongs to the universal ribosomal protein uL24 family. In terms of assembly, part of the 50S ribosomal subunit.

Functionally, one of two assembly initiator proteins, it binds directly to the 5'-end of the 23S rRNA, where it nucleates assembly of the 50S subunit. Its function is as follows. One of the proteins that surrounds the polypeptide exit tunnel on the outside of the subunit. The polypeptide is Large ribosomal subunit protein uL24 (Prochlorococcus marinus (strain NATL1A)).